The following is a 1704-amino-acid chain: Villidin (1704 aa).

WD repeat units follow at residues 82-122 (GHTD…LIKD), 133-173 (KQQK…EQSS), 180-221 (GHED…TPIQ), and 225-271 (THEG…SSQP). Disordered stretches follow at residues 439-460 (IGNS…DSPF) and 606-721 (SVPS…NSST). The span at 442-456 (SGSGGGGGDGDGNGG) shows a compositional bias: gly residues. The 105-residue stretch at 459 to 563 (PFITEGIVKQ…WCQSINAYRE (105 aa)) folds into the PH 1 domain. Composition is skewed to low complexity over residues 613–636 (QQQQ…TPTQ), 651–701 (SLKS…SSSS), and 709–721 (NNST…NSST). 2 PH domains span residues 727–828 (DIVI…QNLK) and 871–969 (EQPL…AARK). The disordered stretch occupies residues 848–877 (LISSPMSDDESNTNEGGVEEEEEEQPLEGQ). Positions 854–873 (SDDESNTNEGGVEEEEEEQP) are enriched in acidic residues. Gelsolin-like repeat units lie at residues 1025–1119 (KQKI…LGGN), 1138–1241 (IKTT…FANY), 1293–1390 (GRVK…FKTK), 1404–1494 (KKPS…FEST), and 1520–1615 (RFFV…FRAW). The HP domain maps to 1641 to 1704 (DYLKEIYTYE…EGIKKELFLF (64 aa)).

The protein localises to the membrane. It localises to the cytoplasm. It is found in the cytoskeleton. Its function is as follows. May function as a linker between membranes and the actin cytoskeleton. This is Villidin (vilA) from Dictyostelium discoideum (Social amoeba).